A 160-amino-acid polypeptide reads, in one-letter code: SsrA-binding protein (160 aa).

Belongs to the SmpB family.

Its subcellular location is the cytoplasm. Required for rescue of stalled ribosomes mediated by trans-translation. Binds to transfer-messenger RNA (tmRNA), required for stable association of tmRNA with ribosomes. tmRNA and SmpB together mimic tRNA shape, replacing the anticodon stem-loop with SmpB. tmRNA is encoded by the ssrA gene; the 2 termini fold to resemble tRNA(Ala) and it encodes a 'tag peptide', a short internal open reading frame. During trans-translation Ala-aminoacylated tmRNA acts like a tRNA, entering the A-site of stalled ribosomes, displacing the stalled mRNA. The ribosome then switches to translate the ORF on the tmRNA; the nascent peptide is terminated with the 'tag peptide' encoded by the tmRNA and targeted for degradation. The ribosome is freed to recommence translation, which seems to be the essential function of trans-translation. The protein is SsrA-binding protein of Escherichia coli O139:H28 (strain E24377A / ETEC).